Consider the following 79-residue polypeptide: RNA-binding protein Hfq (79 aa).

The region spanning 10–69 is the Sm domain; it reads DPFLNALRKEHVPVSIYLVNGIKLQGNIESFDQYVVLLRNTVTQMVYKHAISTVVPARAV.

It belongs to the Hfq family. Homohexamer.

Functionally, RNA chaperone that binds small regulatory RNA (sRNAs) and mRNAs to facilitate mRNA translational regulation in response to envelope stress, environmental stress and changes in metabolite concentrations. Also binds with high specificity to tRNAs. The polypeptide is RNA-binding protein Hfq (Cupriavidus metallidurans (strain ATCC 43123 / DSM 2839 / NBRC 102507 / CH34) (Ralstonia metallidurans)).